Consider the following 360-residue polypeptide: Dihydroorotate dehydrogenase (quinone) (360 aa).

Residues 67 to 71 and threonine 91 contribute to the FMN site; that span reads AGLDK. Residue lysine 71 coordinates substrate. 116 to 120 provides a ligand contact to substrate; the sequence is NRMGF. The FMN site is built by asparagine 145 and asparagine 176. Asparagine 176 is a substrate binding site. Serine 179 serves as the catalytic Nucleophile. Asparagine 181 contributes to the substrate binding site. Lysine 222 and serine 250 together coordinate FMN. A substrate-binding site is contributed by 251-252; the sequence is NT. FMN is bound by residues glycine 272, glycine 301, and 322-323; that span reads YS.

The protein belongs to the dihydroorotate dehydrogenase family. Type 2 subfamily. Monomer. It depends on FMN as a cofactor.

It localises to the cell membrane. It catalyses the reaction (S)-dihydroorotate + a quinone = orotate + a quinol. It participates in pyrimidine metabolism; UMP biosynthesis via de novo pathway; orotate from (S)-dihydroorotate (quinone route): step 1/1. Functionally, catalyzes the conversion of dihydroorotate to orotate with quinone as electron acceptor. The sequence is that of Dihydroorotate dehydrogenase (quinone) from Deinococcus deserti (strain DSM 17065 / CIP 109153 / LMG 22923 / VCD115).